The following is a 709-amino-acid chain: Disintegrin and metalloproteinase domain-containing protein 5 (709 aa).

Positions 1–98 (MKTPISSILK…TLSGFIHVIY (98 aa)) are excised as a propeptide. The Extracellular segment spans residues 1–649 (MKTPISSILK…QQNRGIHPKQ (649 aa)). A Peptidase M12B domain is found at 141–334 (RYIKTDIVVD…QDLECLQDLP (194 aa)). Cystine bridges form between Cys-247–Cys-329, Cys-289–Cys-314, Cys-291–Cys-296, Cys-406–Cys-426, Cys-585–Cys-597, Cys-591–Cys-603, and Cys-605–Cys-614. A Disintegrin domain is found at 346–434 (RRICGNGILE…YCVPDTFARN (89 aa)). Residues 581-615 (DFQQCNTSRDCNDHGVCNNFNHCHCDKGYNPPYCE) form the EGF-like; calcium-binding domain. A helical transmembrane segment spans residues 650-670 (QLQLILYITLPLIMIISAVFI). At 671 to 709 (KQSKLSRLCGRERSEGTSCITEDSVSNTKMTTNEGSTLH) the chain is on the cytoplasmic side. A disordered region spans residues 690 to 709 (ITEDSVSNTKMTTNEGSTLH).

As to quaternary structure, interacts with TEX101. In terms of tissue distribution, detected in testis.

The protein resides in the membrane. This is a non catalytic metalloprotease-like protein. May play a role in sperm-egg fusion. The polypeptide is Disintegrin and metalloproteinase domain-containing protein 5 (Adam5) (Rattus norvegicus (Rat)).